A 728-amino-acid polypeptide reads, in one-letter code: Lanosterol synthase (728 aa).

The stretch at 117–159 (RVEMIRYIVNTAHPVDGGWGLHSVDKSTCFGTTMNYVCLRLLG) is one PFTB 1 repeat. Asp-450 serves as the catalytic Proton donor. PFTB repeat units follow at residues 561-602 (ISSA…HTVG) and 611-657 (VKKG…ALIG).

Belongs to the terpene cyclase/mutase family.

Its subcellular location is the lipid droplet. It is found in the endoplasmic reticulum membrane. It carries out the reaction (S)-2,3-epoxysqualene = lanosterol. The protein operates within terpene metabolism; lanosterol biosynthesis; lanosterol from farnesyl diphosphate: step 3/3. In terms of biological role, lanosterol synthase; part of the third module of ergosterol biosynthesis pathway that includes the late steps of the pathway. ERG7 catalyzes the cyclization of (S)-2,3 oxidosqualene to lanosterol, a reaction that forms the sterol core. The third module or late pathway involves the ergosterol synthesis itself through consecutive reactions that mainly occur in the endoplasmic reticulum (ER) membrane. Firstly, the squalene synthase ERG9 catalyzes the condensation of 2 farnesyl pyrophosphate moieties to form squalene, which is the precursor of all steroids. Squalene synthase is crucial for balancing the incorporation of farnesyl diphosphate (FPP) into sterol and nonsterol isoprene synthesis. Secondly, the squalene epoxidase ERG1 catalyzes the stereospecific oxidation of squalene to (S)-2,3-epoxysqualene, which is considered to be a rate-limiting enzyme in steroid biosynthesis. Then, the lanosterol synthase ERG7 catalyzes the cyclization of (S)-2,3 oxidosqualene to lanosterol, a reaction that forms the sterol core. In the next steps, lanosterol is transformed to zymosterol through a complex process involving various demethylation, reduction and desaturation reactions. The lanosterol 14-alpha-demethylase ERG11 (also known as CYP51) catalyzes C14-demethylation of lanosterol to produce 4,4'-dimethyl cholesta-8,14,24-triene-3-beta-ol, which is critical for ergosterol biosynthesis. The C-14 reductase ERG24 reduces the C14=C15 double bond of 4,4-dimethyl-cholesta-8,14,24-trienol to produce 4,4-dimethyl-cholesta-8,24-dienol. 4,4-dimethyl-cholesta-8,24-dienol is substrate of the C-4 demethylation complex ERG25-ERG26-ERG27 in which ERG25 catalyzes the three-step monooxygenation required for the demethylation of 4,4-dimethyl and 4alpha-methylsterols, ERG26 catalyzes the oxidative decarboxylation that results in a reduction of the 3-beta-hydroxy group at the C-3 carbon to an oxo group, and ERG27 is responsible for the reduction of the keto group on the C-3. ERG28 has a role as a scaffold to help anchor ERG25, ERG26 and ERG27 to the endoplasmic reticulum and ERG29 regulates the activity of the iron-containing C4-methylsterol oxidase ERG25. Then, the sterol 24-C-methyltransferase ERG6 catalyzes the methyl transfer from S-adenosyl-methionine to the C-24 of zymosterol to form fecosterol. The C-8 sterol isomerase ERG2 catalyzes the reaction which results in unsaturation at C-7 in the B ring of sterols and thus converts fecosterol to episterol. The sterol-C5-desaturase ERG3 then catalyzes the introduction of a C-5 double bond in the B ring to produce 5-dehydroepisterol. The C-22 sterol desaturase ERG5 further converts 5-dehydroepisterol into ergosta-5,7,22,24(28)-tetraen-3beta-ol by forming the C-22(23) double bond in the sterol side chain. Finally, ergosta-5,7,22,24(28)-tetraen-3beta-ol is substrate of the C-24(28) sterol reductase ERG4 to produce ergosterol. The chain is Lanosterol synthase from Candida albicans (strain SC5314 / ATCC MYA-2876) (Yeast).